A 591-amino-acid chain; its full sequence is Protein NRT1/ PTR FAMILY 1.1 (591 aa).

A run of 11 helical transmembrane segments spans residues 68-88 (TVLF…AFLS), 98-118 (IVIA…TAML), 139-159 (SSQL…SGGI), 186-206 (FFGW…TVIV), 216-236 (IGFG…VFAS), 329-349 (LKAL…SINV), 374-394 (IPAG…VVLY), 418-438 (MGLG…VEHY), 460-480 (AMWL…TGIG), 496-516 (IAAS…SVIL), and 543-563 (YYWV…VCSW).

This sequence belongs to the major facilitator superfamily. Proton-dependent oligopeptide transporter (POT/PTR) (TC 2.A.17) family. In terms of tissue distribution, expressed in siliques, shoots and roots. Mainly detected in larger expanded leaves, in the companion cells of major veins.

It localises to the cell membrane. Functionally, low-affinity nitrate transporter involved in xylem-to-phloem transfer for redistributing nitrate into developing leaves. Not involved in dipeptides transport. The protein is Protein NRT1/ PTR FAMILY 1.1 (NPF1.1) of Arabidopsis thaliana (Mouse-ear cress).